Reading from the N-terminus, the 245-residue chain is P2Y purinoceptor 13 (245 aa).

Topologically, residues 1–9 (QLRAFVCRL) are extracellular. An intrachain disulfide couples cysteine 7 to cysteine 85. The helical transmembrane segment at 10-30 (SSVIFYETMYVGIVLLGLIAF) threads the bilayer. Over 31–35 (DRFLK) the chain is Cytoplasmic. The helical transmembrane segment at 36 to 56 (IIRPLRNIFLKKTVFAKTVSV) threads the bilayer. At 57-85 (FIWSFFFFISLPNMILSNKEATPSSVKKC) the chain is on the extracellular side. Residues 86–106 (ASLKGPLGLKWHQIVNNISQF) form a helical membrane-spanning segment. Over 107–126 (IFWTVFVLMLVFYVVIAKKV) the chain is Cytoplasmic. A helical membrane pass occupies residues 127 to 147 (YDSYRKSKSKDRKNNKKLEGK). At 148-174 (VFVVVAVFFVCFAPFHFTRVPYTYSQT) the chain is on the extracellular side. Residues 175–195 (NNKTDCRLQNQLFIAKETTLF) traverse the membrane as a helical segment. At 196-245 (LAATNICMDPLIYIFLCKKFTEKLPCMRGRKTIASSQENQSSQTDNITLG) the chain is on the cytoplasmic side.

The protein belongs to the G-protein coupled receptor 1 family.

The protein resides in the cell membrane. Receptor for ADP. Coupled to G(i)-proteins. May play a role in hematopoiesis and the immune system. The sequence is that of P2Y purinoceptor 13 (P2RY13) from Macaca fascicularis (Crab-eating macaque).